Consider the following 510-residue polypeptide: Histidine ammonia-lyase (510 aa).

The 5-imidazolinone (Ala-Gly) cross-link spans 143-145 (ASG). 2,3-didehydroalanine (Ser) is present on Ser-144.

It belongs to the PAL/histidase family. Post-translationally, contains an active site 4-methylidene-imidazol-5-one (MIO), which is formed autocatalytically by cyclization and dehydration of residues Ala-Ser-Gly.

It is found in the cytoplasm. The catalysed reaction is L-histidine = trans-urocanate + NH4(+). It functions in the pathway amino-acid degradation; L-histidine degradation into L-glutamate; N-formimidoyl-L-glutamate from L-histidine: step 1/3. This is Histidine ammonia-lyase from Yersinia pestis.